A 534-amino-acid chain; its full sequence is Bifunctional purine biosynthesis protein PurH (534 aa).

One can recognise an MGS-like domain in the interval 1 to 148 (MNTVRPIRRA…KNHQDVTIVV (148 aa)).

Belongs to the PurH family.

The catalysed reaction is (6R)-10-formyltetrahydrofolate + 5-amino-1-(5-phospho-beta-D-ribosyl)imidazole-4-carboxamide = 5-formamido-1-(5-phospho-D-ribosyl)imidazole-4-carboxamide + (6S)-5,6,7,8-tetrahydrofolate. The enzyme catalyses IMP + H2O = 5-formamido-1-(5-phospho-D-ribosyl)imidazole-4-carboxamide. It participates in purine metabolism; IMP biosynthesis via de novo pathway; 5-formamido-1-(5-phospho-D-ribosyl)imidazole-4-carboxamide from 5-amino-1-(5-phospho-D-ribosyl)imidazole-4-carboxamide (10-formyl THF route): step 1/1. The protein operates within purine metabolism; IMP biosynthesis via de novo pathway; IMP from 5-formamido-1-(5-phospho-D-ribosyl)imidazole-4-carboxamide: step 1/1. The chain is Bifunctional purine biosynthesis protein PurH from Shewanella denitrificans (strain OS217 / ATCC BAA-1090 / DSM 15013).